Consider the following 244-residue polypeptide: ATP synthase subunit a (244 aa).

Transmembrane regions (helical) follow at residues 25–45 (ISFT…LLIF), 85–105 (YFAF…FGMI), 115–135 (IIVT…IGFM), 144–164 (LFVP…IEII), 193–213 (GFVI…SVAL), and 216–236 (LEIL…CIYL).

It belongs to the ATPase A chain family. In terms of assembly, F-type ATPases have 2 components, CF(1) - the catalytic core - and CF(0) - the membrane proton channel. CF(1) has five subunits: alpha(3), beta(3), gamma(1), delta(1), epsilon(1). CF(0) has three main subunits: a(1), b(2) and c(9-12). The alpha and beta chains form an alternating ring which encloses part of the gamma chain. CF(1) is attached to CF(0) by a central stalk formed by the gamma and epsilon chains, while a peripheral stalk is formed by the delta and b chains.

The protein localises to the cell inner membrane. Its function is as follows. Key component of the proton channel; it plays a direct role in the translocation of protons across the membrane. The chain is ATP synthase subunit a from Pelagibacter ubique (strain HTCC1062).